A 641-amino-acid polypeptide reads, in one-letter code: FACT complex subunit SSRP1-A (641 aa).

A disordered region spans residues 459-561 (TDDDAVDPHL…DPNAPKRAMT (103 aa)). The segment covering 476–487 (GDEESDEEDEDF) has biased composition (acidic residues). Basic and acidic residues predominate over residues 512–524 (GGEKEKLSKKEAS). Residues 556 to 624 (PKRAMTPFMY…RYEKESAVYR (69 aa)) constitute a DNA-binding region (HMG box).

Belongs to the SSRP1 family. As to quaternary structure, component of the FACT complex, a stable heterodimer of SPT16 and SSRP1.

It localises to the nucleus. The protein localises to the chromosome. Functionally, component of the FACT complex, a general chromatin factor that acts to reorganize nucleosomes. The FACT complex is involved in multiple processes that require DNA as a template such as mRNA elongation, DNA replication and DNA repair. During transcription elongation the FACT complex acts as a histone chaperone that both destabilizes and restores nucleosomal structure. It facilitates the passage of RNA polymerase II and transcription by promoting the dissociation of one histone H2A-H2B dimer from the nucleosome, then subsequently promotes the reestablishment of the nucleosome following the passage of RNA polymerase II. Binds specifically to double-stranded DNA. The sequence is that of FACT complex subunit SSRP1-A (SSRP1-A) from Oryza sativa subsp. japonica (Rice).